The following is a 146-amino-acid chain: Transcriptional regulator MraZ (146 aa).

SpoVT-AbrB domains are found at residues 9–55 and 81–124; these read TSAL…PRPV and AMDV…DAQR.

The protein belongs to the MraZ family. In terms of assembly, forms oligomers.

It localises to the cytoplasm. It is found in the nucleoid. This is Transcriptional regulator MraZ from Leptothrix cholodnii (strain ATCC 51168 / LMG 8142 / SP-6) (Leptothrix discophora (strain SP-6)).